The sequence spans 238 residues: Purine nucleoside phosphorylase DeoD-type (238 aa).

Histidine 4 serves as a coordination point for a purine D-ribonucleoside. Phosphate is bound by residues glycine 20, arginine 24, arginine 43, and 87–90; that span reads RVGS. A purine D-ribonucleoside-binding positions include 179-181 and 203-204; these read EME and SD. Aspartate 204 acts as the Proton donor in catalysis.

This sequence belongs to the PNP/UDP phosphorylase family. As to quaternary structure, homohexamer; trimer of homodimers.

It catalyses the reaction a purine D-ribonucleoside + phosphate = a purine nucleobase + alpha-D-ribose 1-phosphate. The catalysed reaction is a purine 2'-deoxy-D-ribonucleoside + phosphate = a purine nucleobase + 2-deoxy-alpha-D-ribose 1-phosphate. Functionally, catalyzes the reversible phosphorolytic breakdown of the N-glycosidic bond in the beta-(deoxy)ribonucleoside molecules, with the formation of the corresponding free purine bases and pentose-1-phosphate. The chain is Purine nucleoside phosphorylase DeoD-type from Haemophilus influenzae (strain 86-028NP).